A 447-amino-acid chain; its full sequence is Chitobiosyldiphosphodolichol beta-mannosyltransferase (447 aa).

The Cytoplasmic segment spans residues Met-1–Thr-2. A helical; Signal-anchor for type II membrane protein membrane pass occupies residues Leu-3–Leu-23. The Lumenal segment spans residues Pro-24–Thr-447.

Belongs to the glycosyltransferase group 1 family. Glycosyltransferase 33 subfamily.

The protein localises to the endoplasmic reticulum membrane. It carries out the reaction an N,N'-diacetylchitobiosyl-diphospho-di-trans,poly-cis-dolichol + GDP-alpha-D-mannose = a beta-D-Man-(1-&gt;4)-beta-D-GlcNAc-(1-&gt;4)-alpha-D-GlcNAc-diphospho-di-trans,poly-cis-dolichol + GDP + H(+). The protein operates within protein modification; protein glycosylation. In terms of biological role, participates in the formation of the lipid-linked precursor oligosaccharide for N-glycosylation. Involved in assembling the dolichol-pyrophosphate-GlcNAc(2)-Man(5) intermediate on the cytoplasmic surface of the ER. This is Chitobiosyldiphosphodolichol beta-mannosyltransferase from Arthroderma benhamiae (strain ATCC MYA-4681 / CBS 112371) (Trichophyton mentagrophytes).